The chain runs to 158 residues: MRSPKVKFLTIFTFCIFITKMSFASNSCSNEAGTMFRIEPNLIKAIALVESNLKKDSIGKNRDKNNNIKSLDYWLMQINQMHIPLLKKRGIIKDERDLLDNPCLNIKIGTEILYNHFSRCGVTWQCLGTYNAGFAMDNQKKRQQYAPKYILYIPGLMN.

The first 24 residues, 1-24 (MRSPKVKFLTIFTFCIFITKMSFA), serve as a signal peptide directing secretion.

The protein belongs to the IagB/IpgF/P19 family.

It is found in the periplasm. This chain is Putative peptidoglycan-binding-like protein (pbl), found in Escherichia coli (strain K12).